Here is a 418-residue protein sequence, read N- to C-terminus: Gamma-glutamyl phosphate reductase (418 aa).

This sequence belongs to the gamma-glutamyl phosphate reductase family.

It localises to the cytoplasm. The enzyme catalyses L-glutamate 5-semialdehyde + phosphate + NADP(+) = L-glutamyl 5-phosphate + NADPH + H(+). It functions in the pathway amino-acid biosynthesis; L-proline biosynthesis; L-glutamate 5-semialdehyde from L-glutamate: step 2/2. Catalyzes the NADPH-dependent reduction of L-glutamate 5-phosphate into L-glutamate 5-semialdehyde and phosphate. The product spontaneously undergoes cyclization to form 1-pyrroline-5-carboxylate. In Geobacter metallireducens (strain ATCC 53774 / DSM 7210 / GS-15), this protein is Gamma-glutamyl phosphate reductase.